The primary structure comprises 401 residues: Chorismate synthase (401 aa).

The NADP(+) site is built by Arg-40 and Arg-46. FMN-binding positions include Arg-135–Ser-137, Gln-256–Ala-257, Gly-302, Lys-317–Ser-321, and Arg-343.

The protein belongs to the chorismate synthase family. As to quaternary structure, homotetramer. Requires FMNH2 as cofactor.

The enzyme catalyses 5-O-(1-carboxyvinyl)-3-phosphoshikimate = chorismate + phosphate. The protein operates within metabolic intermediate biosynthesis; chorismate biosynthesis; chorismate from D-erythrose 4-phosphate and phosphoenolpyruvate: step 7/7. Catalyzes the anti-1,4-elimination of the C-3 phosphate and the C-6 proR hydrogen from 5-enolpyruvylshikimate-3-phosphate (EPSP) to yield chorismate, which is the branch point compound that serves as the starting substrate for the three terminal pathways of aromatic amino acid biosynthesis. This reaction introduces a second double bond into the aromatic ring system. This Saccharopolyspora erythraea (strain ATCC 11635 / DSM 40517 / JCM 4748 / NBRC 13426 / NCIMB 8594 / NRRL 2338) protein is Chorismate synthase.